We begin with the raw amino-acid sequence, 350 residues long: MMISSVLVAGVVAVSAALASKHPKQYSFKPEDAETIWNGDIPVLYDFGDSQSASYSGSWWTSSYITGTNGEQYLVISHYLDTPVFTYFRASTLNLETLDYNQFITLGNNTANSTTLDVKVGDNGIQSLTADNISQQRAYANDENVTFDITFDATSRVISNAGAGVFQFGPSITYEWGLPNCRTQGSVTDTGGKNITVDPAKSFTWYDRQWGTAAVTSGNWTWFQMHIPETSYKLSVWIIDNDVTNQFSRFATIRGDNDEFQVLPLEWKPIYDRTYQSTAADILYPLDWELDISGFGVFQLSSILDDQEIVGTTAIQTAYEGFVTFNGTVHNKKVQGYGLVEVVYSNWESL.

An N-terminal signal peptide occupies residues 1-19 (MMISSVLVAGVVAVSAALA).

As to quaternary structure, homodimer. Post-translationally, glycosylated.

Its subcellular location is the secreted. The enzyme catalyses kievitone hydrate = kievitone + H2O. Functionally, converts fungitoxic kievitone to the less toxic kievitone hydrate, and thereby protects the pathogenic fungus against this phytoalexin. This chain is Kievitone hydratase (khs), found in Fusarium solani subsp. phaseoli (Nectria haematococca).